Reading from the N-terminus, the 152-residue chain is UPF0178 protein YaiI (152 aa).

It belongs to the UPF0178 family.

The chain is UPF0178 protein YaiI from Escherichia coli O17:K52:H18 (strain UMN026 / ExPEC).